Reading from the N-terminus, the 56-residue chain is Large ribosomal subunit protein bL32 (56 aa).

A compositionally biased stretch (basic residues) spans 1–16 (MAVQKSKKSRSMRGMR). The interval 1–33 (MAVQKSKKSRSMRGMRRSHDALTTSAVSVDATS) is disordered. Residues 21–33 (ALTTSAVSVDATS) are compositionally biased toward polar residues.

It belongs to the bacterial ribosomal protein bL32 family.

The chain is Large ribosomal subunit protein bL32 from Aliivibrio fischeri (strain ATCC 700601 / ES114) (Vibrio fischeri).